A 237-amino-acid polypeptide reads, in one-letter code: Protein FEV (237 aa).

The ETS DNA-binding region spans 47 to 127 (IQLWQFLLEL…HGKRYAYRFD (81 aa)). The may mediate active transcriptional repression stretch occupies residues 129–237 (QGLAQACQPP…AASHLGGHYH (109 aa)).

This sequence belongs to the ETS family. As to expression, expressed in central serotonergic neurons.

It is found in the nucleus. In terms of biological role, functions as a transcriptional regulator. May function as a transcriptional repressor. Functions in the differentiation and the maintenance of the central serotonergic neurons. May play a role in cell growth. This chain is Protein FEV (Fev), found in Mus musculus (Mouse).